The following is a 483-amino-acid chain: Aspartyl/glutamyl-tRNA(Asn/Gln) amidotransferase subunit B (483 aa).

Belongs to the GatB/GatE family. GatB subfamily. As to quaternary structure, heterotrimer of A, B and C subunits.

The enzyme catalyses L-glutamyl-tRNA(Gln) + L-glutamine + ATP + H2O = L-glutaminyl-tRNA(Gln) + L-glutamate + ADP + phosphate + H(+). The catalysed reaction is L-aspartyl-tRNA(Asn) + L-glutamine + ATP + H2O = L-asparaginyl-tRNA(Asn) + L-glutamate + ADP + phosphate + 2 H(+). Allows the formation of correctly charged Asn-tRNA(Asn) or Gln-tRNA(Gln) through the transamidation of misacylated Asp-tRNA(Asn) or Glu-tRNA(Gln) in organisms which lack either or both of asparaginyl-tRNA or glutaminyl-tRNA synthetases. The reaction takes place in the presence of glutamine and ATP through an activated phospho-Asp-tRNA(Asn) or phospho-Glu-tRNA(Gln). This is Aspartyl/glutamyl-tRNA(Asn/Gln) amidotransferase subunit B from Rickettsia conorii (strain ATCC VR-613 / Malish 7).